A 247-amino-acid chain; its full sequence is Ribosomal RNA small subunit methyltransferase G (247 aa).

S-adenosyl-L-methionine-binding positions include G84, F89, A136 to E137, and R155.

It belongs to the methyltransferase superfamily. RNA methyltransferase RsmG family.

The protein resides in the cytoplasm. Specifically methylates the N7 position of a guanine in 16S rRNA. In Prochlorococcus marinus (strain MIT 9313), this protein is Ribosomal RNA small subunit methyltransferase G.